Consider the following 358-residue polypeptide: Alternative oxidase, mitochondrial (358 aa).

The helical transmembrane segment at 152 to 172 threads the bilayer; sequence LIRYVFLESVAGVPGMVAGML. Glu-159, Glu-198, and His-201 together coordinate Fe cation. A helical membrane pass occupies residues 218–238; sequence MILGAQGVFFNSFFLCYLFSP. Glu-249, Glu-306, and His-309 together coordinate Fe cation.

Belongs to the alternative oxidase family. Fe cation is required as a cofactor.

It localises to the mitochondrion inner membrane. Its function is as follows. Catalyzes cyanide-resistant oxygen consumption. May increase respiration when the cytochrome respiratory pathway is restricted, or in response to low temperatures. In Monilinia fructicola (Brown rot fungus), this protein is Alternative oxidase, mitochondrial (AOX1).